A 1139-amino-acid chain; its full sequence is GRIP and coiled-coil domain-containing protein (1139 aa).

Positions 366 to 388 (NDDSQINNNVSNKVNSPDDDPNT) are disordered. Residues 369–380 (SQINNNVSNKVN) show a composition bias toward polar residues. Coiled coils occupy residues 472–648 (VTKL…INNE) and 758–877 (LYIL…ETQQ). A disordered region spans residues 1004–1024 (NEQENDNNNNNNNNNNNNNVE). The span at 1009 to 1022 (DNNNNNNNNNNNNN) shows a compositional bias: low complexity. A coiled-coil region spans residues 1043–1084 (YKKIRKKLETYEILLNEQQEGKKKMTEEINSLKNQVKNYESI). The 52-residue stretch at 1084–1135 (INGNYQHIIYQKNILSNFIAQIPSRIQVDDYVSVIFNSFNFSNQEIEAINIK) folds into the GRIP domain.

The polypeptide is GRIP and coiled-coil domain-containing protein (Plasmodium falciparum (isolate 3D7)).